The primary structure comprises 184 residues: Large ribosomal subunit protein eL14 (184 aa).

Residues 149-184 (KNAKKVDSTPAAKKRIEKARAARKAKPTAAKEKSKK) form a disordered region. Basic residues predominate over residues 160 to 174 (AKKRIEKARAARKAK).

This sequence belongs to the eukaryotic ribosomal protein eL14 family.

In Trypanosoma congolense, this protein is Large ribosomal subunit protein eL14.